We begin with the raw amino-acid sequence, 212 residues long: Fe/S biogenesis protein NfuA (212 aa).

[4Fe-4S] cluster-binding residues include Cys-169 and Cys-172.

It belongs to the NfuA family. Homodimer. [4Fe-4S] cluster is required as a cofactor.

Involved in iron-sulfur cluster biogenesis. Binds a 4Fe-4S cluster, can transfer this cluster to apoproteins, and thereby intervenes in the maturation of Fe/S proteins. Could also act as a scaffold/chaperone for damaged Fe/S proteins. In Acinetobacter baumannii (strain SDF), this protein is Fe/S biogenesis protein NfuA.